The sequence spans 446 residues: Solute carrier family 52, riboflavin transporter, member 2 (446 aa).

4 consecutive transmembrane segments (helical) span residues 14 to 34 (LLVA…WVEL), 47 to 67 (LPSY…VVTL), 79 to 99 (APIQ…APLW), and 104 to 124 (VMAG…LALA). N-linked (GlcNAc...) asparagine glycosylation is present at Asn129. Transmembrane regions (helical) follow at residues 147-167 (FFLG…GQGV) and 196-216 (FFGA…GLLL). Residues 228–267 (GSGTGLRGGAPGVEEEEEEEASPLQEPPSQAAGNTPSPDP) form a disordered region. The segment covering 229–238 (SGTGLRGGAP) has biased composition (gly residues). Over residues 254 to 263 (PPSQAAGNTP) the composition is skewed to polar residues. 5 helical membrane passes run 278 to 298 (ACLL…LPAV), 313 to 333 (LAVV…MGIL), 340 to 360 (LGGL…LAIL), 367 to 387 (VGTS…LGVF), and 405 to 425 (ALLA…VTMF).

It belongs to the riboflavin transporter family.

It is found in the cell membrane. It carries out the reaction riboflavin(in) = riboflavin(out). With respect to regulation, riboflavin transport is Na(+)-independent but moderately pH-sensitive. Activity is strongly inhibited by riboflavin analogs, such as lumiflavin. Weakly inhibited by flavin adenine dinucleotide (FAD) and flavin mononucleotide (FMN). Functionally, plasma membrane transporter mediating the uptake by cells of the water soluble vitamin B2/riboflavin that plays a key role in biochemical oxidation-reduction reactions of the carbohydrate, lipid, and amino acid metabolism. May also act as a receptor for 4-hydroxybutyrate. (Microbial infection) In case of infection by porcine endogenous retrovirus (PERV-A), acts as a cell receptor to retroviral envelopes. This chain is Solute carrier family 52, riboflavin transporter, member 2 (SLC52A2), found in Sus scrofa (Pig).